The primary structure comprises 307 residues: Coenzyme PQQ synthesis protein B (307 aa).

The protein belongs to the PqqB family.

The protein operates within cofactor biosynthesis; pyrroloquinoline quinone biosynthesis. In terms of biological role, may be involved in the transport of PQQ or its precursor to the periplasm. This Gluconacetobacter diazotrophicus (strain ATCC 49037 / DSM 5601 / CCUG 37298 / CIP 103539 / LMG 7603 / PAl5) protein is Coenzyme PQQ synthesis protein B.